A 582-amino-acid chain; its full sequence is Aspartate--tRNA ligase (582 aa).

The aspartate stretch occupies residues 198–201 (QIFK). Arg-220 is a binding site for L-aspartate. Residues 220–222 (RDE) and Gln-229 contribute to the ATP site. His-445 contributes to the L-aspartate binding site. Residue Glu-479 coordinates ATP. Arg-486 provides a ligand contact to L-aspartate. 531 to 534 (GFDR) is a binding site for ATP.

The protein belongs to the class-II aminoacyl-tRNA synthetase family. Type 1 subfamily. Homodimer.

It localises to the cytoplasm. The catalysed reaction is tRNA(Asp) + L-aspartate + ATP = L-aspartyl-tRNA(Asp) + AMP + diphosphate. Catalyzes the attachment of L-aspartate to tRNA(Asp) in a two-step reaction: L-aspartate is first activated by ATP to form Asp-AMP and then transferred to the acceptor end of tRNA(Asp). This chain is Aspartate--tRNA ligase, found in Amoebophilus asiaticus (strain 5a2).